Reading from the N-terminus, the 189-residue chain is uncharacterized protein (189 aa).

Helical transmembrane passes span 4-21 (AIST…FLFR), 34-56 (AFYP…PLIL), 79-101 (LLVI…LIYS), 122-144 (RILS…VLLN), and 148-170 (ILHV…NLLV).

The protein localises to the cell membrane. This is an uncharacterized protein from Archaeoglobus fulgidus (strain ATCC 49558 / DSM 4304 / JCM 9628 / NBRC 100126 / VC-16).